A 1160-amino-acid polypeptide reads, in one-letter code: Major DNA-binding protein (1160 aa).

The short motif at 808-809 is the Required for filament formation element; sequence FW. The segment at 1139–1160 is required for nuclear localization; sequence ARGGEHAFDEDCGLLPAKRGRL.

It belongs to the herpesviridae major DNA-binding protein family. As to quaternary structure, homooligomers. Forms double-helical filaments necessary for the formation of replication compartments within the host nucleus. Interacts with the origin-binding protein. Interacts with the helicase primase complex; this interaction stimulates primer synthesis activity of the helicase-primase complex. Interacts with the DNA polymerase. Interacts with the alkaline exonuclease; this interaction increases its nuclease processivity.

It is found in the host nucleus. In terms of biological role, single-stranded DNA-binding protein required for DNA replication. Its function is as follows. Plays several crucial roles in viral infection. Participates in the opening of the viral DNA origin to initiate replication by interacting with the origin-binding protein. May disrupt loops, hairpins and other secondary structures present on ssDNA to reduce and eliminate pausing of viral DNA polymerase at specific sites during elongation. Promotes viral DNA recombination by performing strand-transfer, characterized by the ability to transfer a DNA strand from a linear duplex to a complementary single-stranded DNA circle. Can also catalyze the renaturation of complementary single strands. Additionally, reorganizes the host cell nucleus, leading to the formation of prereplicative sites and replication compartments. This process is driven by the protein which can form double-helical filaments in the absence of DNA. In Simian cytomegalovirus (strain Colburn), this protein is Major DNA-binding protein.